The primary structure comprises 218 residues: dTTP/UTP pyrophosphatase (218 aa).

Residues 1-10 (MTASPSSAEG) are compositionally biased toward polar residues. Residues 1–20 (MTASPSSAEGSSGLPDRPKL) are disordered. Asp87 (proton acceptor) is an active-site residue.

Belongs to the Maf family. YhdE subfamily. It depends on a divalent metal cation as a cofactor.

The protein localises to the cytoplasm. It carries out the reaction dTTP + H2O = dTMP + diphosphate + H(+). It catalyses the reaction UTP + H2O = UMP + diphosphate + H(+). Nucleoside triphosphate pyrophosphatase that hydrolyzes dTTP and UTP. May have a dual role in cell division arrest and in preventing the incorporation of modified nucleotides into cellular nucleic acids. The polypeptide is dTTP/UTP pyrophosphatase (Gluconobacter oxydans (strain 621H) (Gluconobacter suboxydans)).